Reading from the N-terminus, the 377-residue chain is Palmitoyltransferase ZDHHC16 (377 aa).

Residues 1-77 (MRGQRSLLLG…VYWLVDNVIR (77 aa)) are Cytoplasmic-facing. Residues 78–98 (WFGVVFVVLVIVLTGSIVAIA) form a helical membrane-spanning segment. Topologically, residues 99–116 (YLCVLPLILRTYSVPRLC) are lumenal. The chain crosses the membrane as a helical span at residues 117–137 (WHFFYSHWNLILIVFHYYQAI). Topologically, residues 138–198 (TTPPGYPPQG…NNCVGHYNHR (61 aa)) are cytoplasmic. The DHHC domain occupies 155 to 205 (SICKKCIYPKPARTHHCSICNRCVLKMDHHCPWLNNCVGHYNHRYFFSFCF). Cys-185 acts as the S-palmitoyl cysteine intermediate in catalysis. A helical transmembrane segment spans residues 199 to 219 (YFFSFCFFMTLGCVYCSYGSW). Residues 220–266 (DLFREAYAAIEKMKQLDKNKLQAVANQTYHQTPPPTFSFRERMTHKS) lie on the Lumenal side of the membrane. The chain crosses the membrane as a helical span at residues 267–287 (LVYLWFLCSSVALALGALTVW). The Cytoplasmic segment spans residues 288 to 377 (HAVLISRGET…TAHSASVMAV (90 aa)).

Belongs to the DHHC palmitoyltransferase family. Interacts with ABL1. Interacts with COPS5/JAB1. Widely expressed.

The protein resides in the endoplasmic reticulum membrane. The enzyme catalyses L-cysteinyl-[protein] + hexadecanoyl-CoA = S-hexadecanoyl-L-cysteinyl-[protein] + CoA. Functionally, palmitoyl acyltransferase that mediates palmitoylation of proteins such as PLN and ZDHHC6. Required during embryonic heart development and cardiac function, possibly by mediating palmitoylation of PLN, thereby affecting PLN phosphorylation and homooligomerization. Also required for eye development. Palmitoylates ZDHHC6, affecting the quaternary assembly of ZDHHC6, its localization, stability and function. May play a role in DNA damage response. May be involved in apoptosis regulation. Involved in the proliferation of neural stem cells by regulating the FGF/ERK pathway. The chain is Palmitoyltransferase ZDHHC16 from Homo sapiens (Human).